Consider the following 234-residue polypeptide: UPF0173 metal-dependent hydrolase Rleg2_1519 (234 aa).

The protein belongs to the UPF0173 family.

The polypeptide is UPF0173 metal-dependent hydrolase Rleg2_1519 (Rhizobium leguminosarum bv. trifolii (strain WSM2304)).